The chain runs to 486 residues: Arginine/agmatine antiporter (486 aa).

The next 12 membrane-spanning stretches (helical) occupy residues 12-32 (LGAI…GIFS), 41-61 (AGVG…FFIA), 85-105 (GFGP…QIFG), 132-152 (PAIL…LKGI), 160-180 (IIGT…TAFL), 211-231 (STML…VMSA), 242-262 (ATIL…ILPF), 296-316 (VGLL…VAEI), 341-361 (VSLY…YFST), 367-387 (MLSI…AFLV), 418-438 (IWLI…LLAL), and 461-481 (EVTE…LFST).

Belongs to the amino acid-polyamine-organocation (APC) superfamily. Basic amino acid/polyamine antiporter (APA) (TC 2.A.3.2) family.

The protein resides in the cell inner membrane. Functionally, catalyzes the exchange of L-arginine for agmatine. The arginine uptake by the bacterium in the macrophage may be a virulence factor against the host innate immune response. The sequence is that of Arginine/agmatine antiporter (aaxC) from Chlamydia abortus (strain DSM 27085 / S26/3) (Chlamydophila abortus).